The sequence spans 483 residues: UDP-N-acetylmuramoyl-L-alanyl-D-glutamate--2,6-diaminopimelate ligase (483 aa).

S29 contributes to the UDP-N-acetyl-alpha-D-muramoyl-L-alanyl-D-glutamate binding site. 112–118 lines the ATP pocket; that stretch reads GTNGKTT. UDP-N-acetyl-alpha-D-muramoyl-L-alanyl-D-glutamate-binding positions include 154–155, S181, and R189; that span reads TT. K221 is subject to N6-carboxylysine. Meso-2,6-diaminopimelate-binding positions include R380, 404-407, G454, and E458; that span reads DNPR. The Meso-diaminopimelate recognition motif signature appears at 404–407; it reads DNPR.

It belongs to the MurCDEF family. MurE subfamily. Mg(2+) is required as a cofactor. Carboxylation is probably crucial for Mg(2+) binding and, consequently, for the gamma-phosphate positioning of ATP.

The protein localises to the cytoplasm. It carries out the reaction UDP-N-acetyl-alpha-D-muramoyl-L-alanyl-D-glutamate + meso-2,6-diaminopimelate + ATP = UDP-N-acetyl-alpha-D-muramoyl-L-alanyl-gamma-D-glutamyl-meso-2,6-diaminopimelate + ADP + phosphate + H(+). Its pathway is cell wall biogenesis; peptidoglycan biosynthesis. In terms of biological role, catalyzes the addition of meso-diaminopimelic acid to the nucleotide precursor UDP-N-acetylmuramoyl-L-alanyl-D-glutamate (UMAG) in the biosynthesis of bacterial cell-wall peptidoglycan. In Clostridium botulinum (strain ATCC 19397 / Type A), this protein is UDP-N-acetylmuramoyl-L-alanyl-D-glutamate--2,6-diaminopimelate ligase.